We begin with the raw amino-acid sequence, 310 residues long: Methionyl-tRNA formyltransferase (310 aa).

111–114 (SILP) provides a ligand contact to (6S)-5,6,7,8-tetrahydrofolate.

It belongs to the Fmt family.

The catalysed reaction is L-methionyl-tRNA(fMet) + (6R)-10-formyltetrahydrofolate = N-formyl-L-methionyl-tRNA(fMet) + (6S)-5,6,7,8-tetrahydrofolate + H(+). Its function is as follows. Attaches a formyl group to the free amino group of methionyl-tRNA(fMet). The formyl group appears to play a dual role in the initiator identity of N-formylmethionyl-tRNA by promoting its recognition by IF2 and preventing the misappropriation of this tRNA by the elongation apparatus. This chain is Methionyl-tRNA formyltransferase, found in Finegoldia magna (strain ATCC 29328 / DSM 20472 / WAL 2508) (Peptostreptococcus magnus).